The chain runs to 187 residues: Putative glutathione-dependent formaldehyde-activating enzyme (187 aa).

The region spanning 20–166 (FPGGKLYCHC…FESVGLKTYD (147 aa)) is the CENP-V/GFA domain. Zn(2+) is bound by residues cysteine 27, cysteine 29, cysteine 48, cysteine 50, cysteine 53, cysteine 95, and cysteine 98.

It belongs to the Gfa family. Zn(2+) serves as cofactor.

The enzyme catalyses S-(hydroxymethyl)glutathione = glutathione + formaldehyde. It functions in the pathway one-carbon metabolism; formaldehyde degradation; formate from formaldehyde (glutathione route): step 1/3. Its function is as follows. Catalyzes the condensation of formaldehyde and glutathione to S-hydroxymethylglutathione. The sequence is that of Putative glutathione-dependent formaldehyde-activating enzyme from Talaromyces marneffei (strain ATCC 18224 / CBS 334.59 / QM 7333) (Penicillium marneffei).